A 295-amino-acid chain; its full sequence is Succinate dehydrogenase [ubiquinone] iron-sulfur subunit, mitochondrial (295 aa).

Residues E67–M144 form the 2Fe-2S ferredoxin-type domain. Positions 106, 111, 114, and 126 each coordinate [2Fe-2S] cluster. The 4Fe-4S ferredoxin-type domain maps to E185 to Y215. Positions 195, 198, and 201 each coordinate [4Fe-4S] cluster. C205 contacts [3Fe-4S] cluster. W210 is an a ubiquinone binding site. 2 residues coordinate [3Fe-4S] cluster: C252 and C258. C262 provides a ligand contact to [4Fe-4S] cluster.

It belongs to the succinate dehydrogenase/fumarate reductase iron-sulfur protein family. In terms of assembly, component of complex II composed of four subunits: a flavoprotein (FP), an iron-sulfur protein (IP), and a cytochrome b composed of a large and a small subunit. It depends on [2Fe-2S] cluster as a cofactor. Requires [3Fe-4S] cluster as cofactor. [4Fe-4S] cluster is required as a cofactor.

It localises to the mitochondrion inner membrane. The catalysed reaction is a quinone + succinate = fumarate + a quinol. It functions in the pathway carbohydrate metabolism; tricarboxylic acid cycle; fumarate from succinate (eukaryal route): step 1/1. Functionally, iron-sulfur protein (IP) subunit of succinate dehydrogenase (SDH) that is involved in complex II of the mitochondrial electron transport chain and is responsible for transferring electrons from succinate to ubiquinone (coenzyme Q). This Mycosarcoma maydis (Corn smut fungus) protein is Succinate dehydrogenase [ubiquinone] iron-sulfur subunit, mitochondrial (SDH2).